Consider the following 192-residue polypeptide: Large ribosomal subunit protein uL5 (192 aa).

The protein belongs to the universal ribosomal protein uL5 family. As to quaternary structure, part of the 50S ribosomal subunit; part of the 5S rRNA/L5/L18/L25 subcomplex. Contacts the 5S rRNA and the P site tRNA. Forms a bridge to the 30S subunit in the 70S ribosome.

This is one of the proteins that bind and probably mediate the attachment of the 5S RNA into the large ribosomal subunit, where it forms part of the central protuberance. In the 70S ribosome it contacts protein S13 of the 30S subunit (bridge B1b), connecting the 2 subunits; this bridge is implicated in subunit movement. Contacts the P site tRNA; the 5S rRNA and some of its associated proteins might help stabilize positioning of ribosome-bound tRNAs. The protein is Large ribosomal subunit protein uL5 of Sphingopyxis alaskensis (strain DSM 13593 / LMG 18877 / RB2256) (Sphingomonas alaskensis).